Here is a 629-residue protein sequence, read N- to C-terminus: Polyadenylate-binding protein 2 (629 aa).

Polar residues predominate over residues 1–12 (MAQVQLQGQTPN). The segment at 1-25 (MAQVQLQGQTPNGSTAAVTSAPATS) is disordered. Residues 13–25 (GSTAAVTSAPATS) are compositionally biased toward low complexity. RRM domains follow at residues 36–114 (TSLY…YSHR), 124–201 (GNIF…PFLR), 215–292 (TNVY…RAQK), and 318–395 (SNLY…IAQR). A disordered region spans residues 480-507 (PQQQRPGGGRRPGGIQHSQQQNPMMQQQ). Over residues 492–507 (GGIQHSQQQNPMMQQQ) the composition is skewed to low complexity. In terms of domain architecture, PABC spans 539-616 (TIGALASNLS…AMDVLRSVAA (78 aa)).

This sequence belongs to the polyadenylate-binding protein type-1 family. In terms of assembly, interacts with eIF-iso4G. Interacts with ERD15/CID1 and CID7. Interacts with Turnip mosaic virus (TuMV) VPg-Pro and RNA-dependent RNA polymerase (RdRp). As to expression, expressed in all organs (at the protein level) but under distinct spatial and temporal regulation within each organ.

The protein resides in the cytoplasm. Its subcellular location is the nucleus. Functionally, binds the poly(A) tail of mRNA. Appears to be an important mediator of the multiple roles of the poly(A) tail in mRNA biogenesis, stability and translation. In the cytoplasm, affects both translation and mRNA decay. Stimulates translation by interaction with translation initiation factor eIF4G, a subunit of the cap-binding complex eIF4F, bringing the 5'- and 3'-ends of the mRNA in proximity. The formation of this circular mRNP structure appears to be critical for the synergistic effects of the cap and the poly(A) tail in facilitating translation initiation, recycling of ribosomes, and mRNA stability. During infection with potyvirus TuMV, acts as a potential integral component of the viral replicase complex that could play an important role in the regulation of potyviral RNA-dependent RNA polymerase (RdRp). Binds to uridylated mRNAs and determines the size of uridine extensions. Limits uridine extension by URT1, likely by binding to the oligo(A) tail and preventing URT1 access. The protein is Polyadenylate-binding protein 2 (PAB2) of Arabidopsis thaliana (Mouse-ear cress).